The following is a 309-amino-acid chain: Succinate--CoA ligase [ADP-forming] subunit alpha-2, mitochondrial (309 aa).

The N-terminal 9 residues, 1–9 (MLSSSFERN), are a transit peptide targeting the hydrogenosome. CoA contacts are provided by residues Lys-54 and 107–109 (ITE). Tyr-171 serves as a coordination point for substrate. The active-site Tele-phosphohistidine intermediate is the His-262.

This sequence belongs to the succinate/malate CoA ligase alpha subunit family. Heterodimer of an alpha and a beta subunit.

It is found in the hydrogenosome lumen. The enzyme catalyses succinate + ATP + CoA = succinyl-CoA + ADP + phosphate. It participates in carbohydrate metabolism; tricarboxylic acid cycle; succinate from succinyl-CoA (ligase route): step 1/1. Its function is as follows. Succinyl-CoA synthetase functions in the citric acid cycle (TCA), coupling the hydrolysis of succinyl-CoA to the synthesis of ATP and thus represents the only step of substrate-level phosphorylation in the TCA. The alpha subunit of the enzyme binds the substrates coenzyme A and phosphate, while succinate binding and nucleotide specificity is provided by the beta subunit. In Trichomonas vaginalis, this protein is Succinate--CoA ligase [ADP-forming] subunit alpha-2, mitochondrial (ALPHA-SCS2).